Reading from the N-terminus, the 96-residue chain is uncharacterized protein (96 aa).

2 consecutive transmembrane segments (helical) span residues 27–47 and 50–70; these read LAFR…ALLI and LSGV…SIVF.

The protein resides in the cell membrane. This is an uncharacterized protein from Haemophilus influenzae (strain ATCC 51907 / DSM 11121 / KW20 / Rd).